The primary structure comprises 122 residues: Small ribosomal subunit protein uS13 (122 aa).

The interval 95 to 122 (GLPVRGQRTHTNARTRKGPRRGTVGKKK) is disordered.

Belongs to the universal ribosomal protein uS13 family. In terms of assembly, part of the 30S ribosomal subunit. Forms a loose heterodimer with protein S19. Forms two bridges to the 50S subunit in the 70S ribosome.

In terms of biological role, located at the top of the head of the 30S subunit, it contacts several helices of the 16S rRNA. In the 70S ribosome it contacts the 23S rRNA (bridge B1a) and protein L5 of the 50S subunit (bridge B1b), connecting the 2 subunits; these bridges are implicated in subunit movement. Contacts the tRNAs in the A and P-sites. This chain is Small ribosomal subunit protein uS13, found in Nitratidesulfovibrio vulgaris (strain ATCC 29579 / DSM 644 / CCUG 34227 / NCIMB 8303 / VKM B-1760 / Hildenborough) (Desulfovibrio vulgaris).